A 426-amino-acid chain; its full sequence is Histidine--tRNA ligase (426 aa).

This sequence belongs to the class-II aminoacyl-tRNA synthetase family. As to quaternary structure, homodimer.

It localises to the cytoplasm. The catalysed reaction is tRNA(His) + L-histidine + ATP = L-histidyl-tRNA(His) + AMP + diphosphate + H(+). This chain is Histidine--tRNA ligase, found in Pseudoalteromonas atlantica (strain T6c / ATCC BAA-1087).